Reading from the N-terminus, the 61-residue chain is Large ribosomal subunit protein uL30 (61 aa).

Positions M1 to E20 are disordered.

Belongs to the universal ribosomal protein uL30 family. Part of the 50S ribosomal subunit.

This is Large ribosomal subunit protein uL30 from Hyphomonas neptunium (strain ATCC 15444).